The following is an 891-amino-acid chain: Protein translocase subunit SecA 1 (891 aa).

Residues glutamine 86, glycine 104–threonine 108, and aspartate 493 each bind ATP. The span at lysine 845 to arginine 873 shows a compositional bias: basic and acidic residues. The disordered stretch occupies residues lysine 845–glutamate 891. Positions 877, 879, 888, and 889 each coordinate Zn(2+).

This sequence belongs to the SecA family. As to quaternary structure, monomer and homodimer. Part of the essential Sec protein translocation apparatus which comprises SecA, SecYEG and auxiliary proteins SecDF. Other proteins may also be involved. Zn(2+) serves as cofactor.

The protein localises to the cell membrane. It is found in the cytoplasm. The enzyme catalyses ATP + H2O + cellular proteinSide 1 = ADP + phosphate + cellular proteinSide 2.. Its function is as follows. Part of the Sec protein translocase complex. Interacts with the SecYEG preprotein conducting channel. Has a central role in coupling the hydrolysis of ATP to the transfer of proteins into and across the cell membrane, serving as an ATP-driven molecular motor driving the stepwise translocation of polypeptide chains across the membrane. The protein is Protein translocase subunit SecA 1 of Alkaliphilus metalliredigens (strain QYMF).